A 331-amino-acid polypeptide reads, in one-letter code: Probable inactive O-methyltransferase 11 (331 aa).

Residues G179, D202, 224–226 (GDF), D225, F226, and K239 each bind S-adenosyl-L-methionine.

It belongs to the class I-like SAM-binding methyltransferase superfamily. Cation-independent O-methyltransferase family. COMT subfamily.

This Dictyostelium discoideum (Social amoeba) protein is Probable inactive O-methyltransferase 11 (omt11).